The primary structure comprises 317 residues: Malate dehydrogenase (317 aa).

NAD(+) contacts are provided by residues Gly-15 to Gly-20 and Asp-39. Arg-88 and Arg-94 together coordinate substrate. Residues Asn-101 and Val-124–Asn-126 each bind NAD(+). Residues Asn-126 and Arg-157 each coordinate substrate. The Proton acceptor role is filled by His-181.

The protein belongs to the LDH/MDH superfamily. MDH type 3 family.

The enzyme catalyses (S)-malate + NAD(+) = oxaloacetate + NADH + H(+). In terms of biological role, catalyzes the reversible oxidation of malate to oxaloacetate. The protein is Malate dehydrogenase of Ehrlichia ruminantium (strain Gardel).